A 106-amino-acid polypeptide reads, in one-letter code: UPF0145 protein CPE0882 (106 aa).

This sequence belongs to the UPF0145 family.

In Clostridium perfringens (strain 13 / Type A), this protein is UPF0145 protein CPE0882.